Here is a 102-residue protein sequence, read N- to C-terminus: Putative pterin-4-alpha-carbinolamine dehydratase (102 aa).

Belongs to the pterin-4-alpha-carbinolamine dehydratase family.

It carries out the reaction (4aS,6R)-4a-hydroxy-L-erythro-5,6,7,8-tetrahydrobiopterin = (6R)-L-erythro-6,7-dihydrobiopterin + H2O. This is Putative pterin-4-alpha-carbinolamine dehydratase from Burkholderia orbicola (strain MC0-3).